The following is a 582-amino-acid chain: Hydrogen peroxide stress regulator 1 (582 aa).

Disordered stretches follow at residues 24-55 (SPFA…HNSS), 107-154 (YPSA…GISK), 347-366 (TSYN…SGET), and 375-422 (NTSG…GGKS). The segment covering 107-125 (YPSASFSTSQHPSQVYNDG) has biased composition (polar residues). Positions 126 to 143 (STLNSNNTTQQLNNNNGF) are enriched in low complexity. A compositionally biased stretch (polar residues) spans 375–392 (NTSGRSPNSMEATEQIGT). The C2H2-type 1 zinc finger occupies 423–446 (FVCPECSKKFKRSEHLRRHIRSLH). The C2H2-type 2; atypical zinc-finger motif lies at 452-473 (FVCICGKRFSRRDNLRQHERLH).

The protein resides in the nucleus. Functionally, transcription factor that globally supports gene expression in response to hydrogen peroxide. This is Hydrogen peroxide stress regulator 1 (hsr1) from Schizosaccharomyces pombe (strain 972 / ATCC 24843) (Fission yeast).